Consider the following 830-residue polypeptide: Leucine--tRNA ligase (830 aa).

Positions 34–44 (PYPSGNIHMGH) match the 'HIGH' region motif. The 'KMSKS' region motif lies at 592–596 (KMSKS). Lysine 595 lines the ATP pocket.

This sequence belongs to the class-I aminoacyl-tRNA synthetase family.

It is found in the cytoplasm. The catalysed reaction is tRNA(Leu) + L-leucine + ATP = L-leucyl-tRNA(Leu) + AMP + diphosphate. In Ehrlichia ruminantium (strain Welgevonden), this protein is Leucine--tRNA ligase.